The sequence spans 311 residues: Coproporphyrin III ferrochelatase 1 (311 aa).

Fe-coproporphyrin III-binding positions include tyrosine 12, arginine 29, 45–46 (RY), serine 53, and tyrosine 124. Histidine 182 and glutamate 263 together coordinate Fe(2+).

This sequence belongs to the ferrochelatase family.

It is found in the cytoplasm. It catalyses the reaction Fe-coproporphyrin III + 2 H(+) = coproporphyrin III + Fe(2+). Its pathway is porphyrin-containing compound metabolism; protoheme biosynthesis. Its function is as follows. Involved in coproporphyrin-dependent heme b biosynthesis. Catalyzes the insertion of ferrous iron into coproporphyrin III to form Fe-coproporphyrin III. This chain is Coproporphyrin III ferrochelatase 1, found in Bacillus cereus (strain ATCC 14579 / DSM 31 / CCUG 7414 / JCM 2152 / NBRC 15305 / NCIMB 9373 / NCTC 2599 / NRRL B-3711).